The following is a 287-amino-acid chain: Proline iminopeptidase (287 aa).

Residues 22–271 enclose the AB hydrolase-1 domain; that stretch reads PLVLLHGGPG…RSRHMAFIDE (250 aa). Ser-98 acts as the Nucleophile in catalysis. Residue Asp-238 is part of the active site. The Proton donor role is filled by His-265.

Belongs to the peptidase S33 family.

Its subcellular location is the cell envelope. It carries out the reaction Release of N-terminal proline from a peptide.. Its function is as follows. Releases the N-terminal proline from various substrates. The protein is Proline iminopeptidase of Lactiplantibacillus plantarum (strain ATCC BAA-793 / NCIMB 8826 / WCFS1) (Lactobacillus plantarum).